Reading from the N-terminus, the 637-residue chain is MYQSACQAATTGSCVPGTGQQPDNERQSALIAQQPPTAPVEPDYSGFDIVKATQYGAIARVRELVESGWDVNQPDSETVTLLHWAAINNRRDIIRYFLEKGATVDAVGGELNATPLHWATRQGHLGAVVLLMAAGADPRIRDAEGCSCIHIAAQFAHTALVAYFIAKGVDPDLQDRGGMTALMWAAWKVCALDPVRLLLTLGANPAMVDYTHGNTALHWAILARNATAISTLVLKSKASLDVPNLRGETPLSMLESQTGAIWIGAKVMDRVKEAALTSQQRRSLLSKLRHDKRLRWWSMVACPFTAFYLAGIVFTVNTLYIIKFFLLGCLYSIFHTIGKALFDEHLMALLPLSVYLATKAWFYVTWLMYIDDAVSFTATVCFLISSLLLWVCFLKSWKGDPGIIRPTREQRFKTIIELSERGGIGFEPASFCSGCLVRRPIRSKHCSVCDRCVARFDHHCPWVGNCIGLKNHSYFMGFLWMLLIMCAWMLYGGSKYYVNQCNVRFDDFLGAMRAIGNCDAWVGWVMGNALLHMSWVILLTICQTYQVICLGMTTNERMNRGRYRHFQAKGGHSPFTRGPIQNLVDFLECSCFGLVQPKRVDWMNYYDYDAQTHQTIEKEPLLSVDCPDGMAGDHQYV.

Residues methionine 1 to arginine 295 lie on the Cytoplasmic side of the membrane. ANK repeat units follow at residues glutamate 77–alanine 106, leucine 111–isoleucine 140, glutamate 144–leucine 173, glycine 177–methionine 207, and histidine 212–valine 242. A helical membrane pass occupies residues tryptophan 296–threonine 315. The Lumenal portion of the chain corresponds to valine 316 to threonine 318. A helical membrane pass occupies residues leucine 319–leucine 341. Over phenylalanine 342–histidine 345 the chain is Cytoplasmic. A helical membrane pass occupies residues leucine 346–tryptophan 366. The Lumenal portion of the chain corresponds to leucine 367–alanine 373. The helical transmembrane segment at valine 374 to leucine 394 threads the bilayer. Residues lysine 395–histidine 472 are Cytoplasmic-facing. Residues serine 430 to tryptophan 480 enclose the DHHC domain. Cysteine 460 acts as the S-palmitoyl cysteine intermediate in catalysis. A helical transmembrane segment spans residues serine 473–glycine 493. Residues serine 494 to alanine 520 are Lumenal-facing. The helical transmembrane segment at tryptophan 521–isoleucine 541 threads the bilayer. Over cysteine 542–valine 637 the chain is Cytoplasmic.

This sequence belongs to the DHHC palmitoyltransferase family. AKR/ZDHHC17 subfamily. Interacts with dorsal-ventral patterning protein Sog. As to expression, in stage 13-15 embryos, expressed in the central nervous system. At the third instar larval stage, expressed in the ventral nerve cord and is enriched in the neuropil.

It is found in the golgi apparatus membrane. It localises to the presynaptic cell membrane. It catalyses the reaction L-cysteinyl-[protein] + hexadecanoyl-CoA = S-hexadecanoyl-L-cysteinyl-[protein] + CoA. Probable palmitoyltransferase which is required for photoreceptor synaptic transmission and for the correct expression and localization of palmitoylated protein Csp and synaptosomal-associated protein Snap25. Probably palmitoylates Csp. Probably also palmitoylates the dorsal-ventral patterning protein Sog and promotes its secretion and activity and the stabilization of the membrane-bound form. Required for synaptic vesicle exocytosis. The polypeptide is Palmitoyltransferase Hip14 (Drosophila melanogaster (Fruit fly)).